We begin with the raw amino-acid sequence, 325 residues long: Interleukin-10 receptor subunit beta (325 aa).

A signal peptide spans 1-19; it reads MAWSLGSWLGGCLLVSALG. Over 20–220 the chain is Extracellular; sequence MVPPPENVRM…QTTHDETVPS (201 aa). Fibronectin type-III domains are found at residues 23 to 111 and 114 to 216; these read PPEN…VDDT and GPPG…THDE. Asn-49, Asn-68, Asn-102, and Asn-161 each carry an N-linked (GlcNAc...) asparagine glycan. A disulfide bridge connects residues Cys-66 and Cys-74. Cys-188 and Cys-209 are disulfide-bonded. A helical membrane pass occupies residues 221-242; the sequence is WMVAVILMASVFMVCLALLGCF. Over 243–325 the chain is Cytoplasmic; it reads ALLWCVYKKT…GTPPGQGPQS (83 aa). The disordered stretch occupies residues 301-325; sequence DSESGKQNPGDSCSLGTPPGQGPQS. Over residues 305-315 the composition is skewed to polar residues; sequence GKQNPGDSCSL.

The protein belongs to the type II cytokine receptor family. In terms of assembly, heterodimer with IFNLR1.

It is found in the membrane. Shared cell surface receptor required for the activation of five class 2 cytokines: IL10, IL22, IL26, IL28, and IFNL1. The IFNLR1/IL10RB dimer is a receptor for the cytokine ligands IFNL2 and IFNL3 and mediates their antiviral activity. The ligand/receptor complex stimulate the activation of the JAK/STAT signaling pathway leading to the expression of IFN-stimulated genes (ISG), which contribute to the antiviral state. This Homo sapiens (Human) protein is Interleukin-10 receptor subunit beta (IL10RB).